The sequence spans 360 residues: Probable neutral protease 2 homolog A (360 aa).

The signal sequence occupies residues 1-17 (MQFTALLAALGAPLALA). Positions 18-183 (ASIPAAAHNH…DDSTGVIDKR (166 aa)) are excised as a propeptide. 3 disulfide bridges follow: cysteine 191–cysteine 262, cysteine 269–cysteine 287, and cysteine 300–cysteine 360. Residue asparagine 205 is glycosylated (N-linked (GlcNAc...) asparagine). Histidine 311 is a binding site for Zn(2+). The active site involves glutamate 312. Zn(2+) is bound by residues histidine 315 and aspartate 326.

This sequence belongs to the peptidase M35 family. Requires Zn(2+) as cofactor.

Its subcellular location is the secreted. It carries out the reaction Preferential cleavage of bonds with hydrophobic residues in P1'. Also 3-Asn-|-Gln-4 and 8-Gly-|-Ser-9 bonds in insulin B chain.. In terms of biological role, probable secreted metalloprotease that shows high activities on basic nuclear substrates such as histone and protamine. May be involved in virulence. The sequence is that of Probable neutral protease 2 homolog A (NpII-A) from Trichophyton rubrum (Athlete's foot fungus).